We begin with the raw amino-acid sequence, 1162 residues long: MSFRIAGPRLLLLGLQLFAKAWSYNLDTRPTQSFLAQAGRHFGYQVLQIEDGVVVGAPGEGDNTGGLYHCRTSSEFCQPVSLHGSNHTSKYLGMTLATDAAKGSLLACDPGLSRTCDQNTYLSGLCYLFPQSLEGPMLQNRPAYQECMKGKVDLVFLFDGSQSLDRKDFEKILEFMKDVMRKLSNTSYQFAAVQFSTDCRTEFTFLDYVKQNKNPDVLLGSVQPMFLLTNTFRAINYVVAHVFKEESGARPDATKVLVIITDGEASDKGNISAAHDITRYIIGIGKHFVSVQKQKTLHIFASEPVEEFVKILDTFEKLKDLFTDLQRRIYAIEGTNRQDLTSFNMELSSSGISADLSKGHAVVGAVGAKDWAGGFLDLREDLQGATFVGQEPLTSDVRGGYLGYTVAWMTSRSSRPLLAAGAPRYQHVGQVLLFQAPEAGGRWNQTQKIEGTQIGSYFGGELCSVDLDQDGEAELLLIGAPLFFGEQRGGRVFTYQRRQSLFEMVSELQGDPGYPLGRFGAAITALTDINGDRLTDVAVGAPLEEQGAVYIFNGKPGGLSPQPSQRIQGAQVFPGIRWFGRSIHGVKDLGGDRLADVVVGAEGRVVVLSSRPVVDVVTELSFSPEEIPVHEVECSYSAREEQKHGVKLKACFRIKPLTPQFQGRLLANLSYTLQLDGHRMRSRGLFPDGSHELSGNTSITPDKSCLDFHFHFPICIQDLISPINVSLNFSLLEEEGTPRDQKVGRAMQPILRPSIHTVTKEIPFEKNCGEDKKCEANLTLSSPARSGPLRLMSSASLAVEWTLSNSGEDAYWVRLDLDFPRGLSFRKVEMLQPHSRMPVSCEELTEGSSLLTKTLKCNVSSPIFKAGQEVSLQVMFNTLLNSSWEDFVELNGTVHCENENSSLQEDNSAATHIPVLYPVNILTKEQENSTLYISFTPKGPKTQQVQHVYQVRIQPSAYDHNMPTLEALVGVPWPHSEDPITYTWSVQTDPLVTCHSEDLKRPSSEAEQPCLPGVQFRCPIVFRREILIQVTGTVELSKEIKASSTLSLCSSLSVSFNSSKHFHLYGSKASEAQVLVKVDLIHEKEMLHVYVLSGIGGLVLLFLIFLALYKVGFFKRNLKEKMEADGGVPNGSPPEDTDPLAVPGEETKDMGCLEPLRESDKD.

A signal peptide spans 1–23 (MSFRIAGPRLLLLGLQLFAKAWS). The Extracellular portion of the chain corresponds to 24-1088 (YNLDTRPTQS…DLIHEKEMLH (1065 aa)). FG-GAP repeat units follow at residues 28 to 79 (TRPT…FCQP) and 80 to 138 (VSLH…GPML). C70 and C77 are disulfide-bonded. A glycan (N-linked (GlcNAc...) asparagine) is linked at N86. 2 disulfide bridges follow: C108–C126 and C147–C199. Residues 153–325 (DLVFLFDGSQ…EKLKDLFTDL (173 aa)) form the VWFA domain. 2 N-linked (GlcNAc...) asparagine glycosylation sites follow: N185 and N270. FG-GAP repeat units lie at residues 336 to 387 (NRQD…GATF), 390 to 443 (QEPL…GGRW), 444 to 504 (NQTQ…LFEM), 505 to 561 (VSEL…GLSP), and 565 to 625 (QRIQ…FSPE). N-linked (GlcNAc...) asparagine glycosylation is present at N444. Ca(2+) contacts are provided by D466, D468, D470, E474, D528, N530, D532, D536, D588, D592, and D596. C651 and C705 are joined by a disulfide. 4 N-linked (GlcNAc...) asparagine glycosylation sites follow: N668, N696, N724, and N728. C768 and C774 are disulfide-bonded. N777 is a glycosylation site (N-linked (GlcNAc...) asparagine). C841 and C857 are disulfide-bonded. N858, N881, N891, N900, and N928 each carry an N-linked (GlcNAc...) asparagine glycan. 2 cysteine pairs are disulfide-bonded: C994–C1010 and C1018–C1049. N-linked (GlcNAc...) asparagine glycosylation occurs at N1057. A helical transmembrane segment spans residues 1089–1109 (VYVLSGIGGLVLLFLIFLALY). The Cytoplasmic segment spans residues 1110–1162 (KVGFFKRNLKEKMEADGGVPNGSPPEDTDPLAVPGEETKDMGCLEPLRESDKD). Positions 1112–1116 (GFFKR) match the GFFKR motif motif. The interval 1124 to 1162 (ADGGVPNGSPPEDTDPLAVPGEETKDMGCLEPLRESDKD) is disordered. A compositionally biased stretch (basic and acidic residues) spans 1145 to 1162 (EETKDMGCLEPLRESDKD).

Belongs to the integrin alpha chain family. In terms of assembly, heterodimer of an alpha and a beta subunit. The ITGAL alpha subunit associates with the ITGB2 beta subunit. Interacts with THBD. Interacts with CD226. Post-translationally, in resting T-cells, up to 40% of surface ITGAL is constitutively phosphorylated. Phosphorylation causes conformational changes needed for ligand binding and is necessary for the activation by some physiological agents. Leukocytes.

It is found in the cell membrane. Integrin ITGAL/ITGB2 is a receptor for ICAM1, ICAM2, ICAM3 and ICAM4. Integrin ITGAL/ITGB2 is a receptor for F11R. Integrin ITGAL/ITGB2 is a receptor for the secreted form of ubiquitin-like protein ISG15; the interaction is mediated by ITGAL. Involved in a variety of immune phenomena including leukocyte-endothelial cell interaction, cytotoxic T-cell mediated killing, and antibody dependent killing by granulocytes and monocytes. Contributes to natural killer cell cytotoxicity. Involved in leukocyte adhesion and transmigration of leukocytes including T-cells and neutrophils. Acts as a platform at the immunological synapse to translate TCR engagement and density of the ITGAL ligand ICAM1 into graded adhesion. Required for generation of common lymphoid progenitor cells in bone marrow, indicating the role in lymphopoiesis. Integrin ITGAL/ITGB2 in association with ICAM3, contributes to apoptotic neutrophil phagocytosis by macrophages. The chain is Integrin alpha-L from Mus musculus (Mouse).